The primary structure comprises 316 residues: MKSIVFMGTPQFAVPILKALIDSEDYQVLAVVSQPDRRVGRKRELRATPVKELALENGIEVLTPEKINHSPEMDRVIELAPDLIITAAFGQFLPDKLLAAAKVAAINVHGSLLPKYRGGAPIQYAVMNGDAETGVTIMYMVKKMDAGDIISQASLPITKQDDTGTMFEKLSLLGRDLLLDTLPKLLAGDITPVKQDESQVVFSPNITREQETIDFTLPADRIDDLVRGLRPAPVGNMVIDGLRTKVYDVTPLTETTDLQPGQVVRVEKHALIIAAGAGTTYQINSLKPAGKPKMDITDYLNGHQNLKPGVQAINND.

111 to 114 is a (6S)-5,6,7,8-tetrahydrofolate binding site; that stretch reads SLLP.

Belongs to the Fmt family.

The enzyme catalyses L-methionyl-tRNA(fMet) + (6R)-10-formyltetrahydrofolate = N-formyl-L-methionyl-tRNA(fMet) + (6S)-5,6,7,8-tetrahydrofolate + H(+). Attaches a formyl group to the free amino group of methionyl-tRNA(fMet). The formyl group appears to play a dual role in the initiator identity of N-formylmethionyl-tRNA by promoting its recognition by IF2 and preventing the misappropriation of this tRNA by the elongation apparatus. This chain is Methionyl-tRNA formyltransferase, found in Limosilactobacillus fermentum (strain NBRC 3956 / LMG 18251) (Lactobacillus fermentum).